Reading from the N-terminus, the 678-residue chain is MENHLPNIFYFPNCVTTFPYRYTQKELDDMKPDERERFKYATFPIIKHRWSHAYVVKDNHVFKLNVETSKRLRRATPPTLSVPVSMNTMLREYITQDGTKISFECYSYLTCKKATSLHDLDDNAIRGLVEGGNRLQLFTNSVGSVKDTVGIFGNPNPFMKVPLKSLHPSMQCKIFESWIHHVPVVLTGDTGVGKTSQVPKLLLWFNYLFGGFVNLSTITFDVQEKPIVLSLPRVALVKLHSETLLTSLGFNEIHKSPVSLKFGNMQEQFVNTRFRRYGIVFSTHKITLNTLFNYSTVILDEVHEHDQTGDIIIAVCRKYIRKLDSLFLMTATLEDDRQRIEEFFTESVFVHIPGGTLFSISEAYVKNSNDSLNKFMYIEEEKRNLVNAIKTYTPPKQSSGIVFVSTVSQCDVYKQYLSERLPYKFYIIHGKIQNINDLLSDIYDNEGVSIIISTPYLESSVTVQNATHVYDTGRVYIPSPYGGREVFISKSMRDQRKGRVGRVKPGMYIYFYDVSELRPIKRIDFEFLHNYVLYSKVFDLQLPEDLFVKPTNMTRLRDVIEYIRSFNISDGVWTRLLSSYYIHILEYAKVYARGGQSAAALDSFERTGNLTDDALDAIKSLNMRAKIISHRKASTHTYALMCRLLFGVYAGKTFIAYHKRPLTGYITMITEHSFIPEY.

The Helicase ATP-binding domain occupies 175-351 (FESWIHHVPV…EFFTESVFVH (177 aa)). ATP is bound at residue 188-195 (GDTGVGKT). Residues 300-303 (DEVH) carry the DEXH box motif. Residues 371–546 (SLNKFMYIEE…VFDLQLPEDL (176 aa)) form the Helicase C-terminal domain.

It belongs to the DEAD box helicase family. DEAH subfamily. As to quaternary structure, monomer.

It localises to the virion. It catalyses the reaction ATP + H2O = ADP + phosphate + H(+). Functionally, NTP-dependent helicase that catalyzes unidirectional unwinding of 3'tailed duplex RNAs and plays an important role during transcription of early mRNAs, presumably by preventing R-loop formation behind the elongating RNA polymerase. Might also play a role in the export of newly synthesized mRNA chains out of the core into the cytoplasm. Required for replication and propagation of viral particles. The polypeptide is RNA helicase NPH-II (OPG084) (Oryctolagus cuniculus (Rabbit)).